A 370-amino-acid polypeptide reads, in one-letter code: MNFEVLYQDNNARCGVFNFNQEIIETPVFMPVGTYGAVKSISTEEIKNTGSRIILSNAFHLYFRPGLEIIKLHGNLHNFMNWSGPILTDSGGFQVFSLSRFCKVNEEGVIFQNHIDGKKTFLTPKISMKIQSDLGSNIVMIFDQCIEYNQNWEKTKNAMERSLYWAKKSRIYFDSYKNKNSLFGIIHGGIYPSLRDISLQELIKIDFDGYALGGLAVGEPKIEMYKLLDHICPQIPKNKPRYLMGVGKPEDLIEGVRRGVDMFDCVIPTRNARNGHLFVTNGVIKIRNKKYKKDLSCLDKTCVCYTCRYYSRSYLHHLDACNEILGARLNTIHNLHYYQTLMSNIRNSIKNNTFEQFSLNFYKQKNKIDF.

The Proton acceptor role is filled by aspartate 89. Residues 89 to 93, aspartate 143, and glycine 214 each bind substrate; that span reads DSGGF. The tract at residues 245–251 is RNA binding; sequence GVGKPED. The active-site Nucleophile is the aspartate 264. Residues 269-273 are RNA binding; important for wobble base 34 recognition; it reads TRNAR. Cysteine 302, cysteine 304, cysteine 307, and histidine 333 together coordinate Zn(2+).

It belongs to the queuine tRNA-ribosyltransferase family. As to quaternary structure, homodimer. Within each dimer, one monomer is responsible for RNA recognition and catalysis, while the other monomer binds to the replacement base PreQ1. Zn(2+) serves as cofactor.

The enzyme catalyses 7-aminomethyl-7-carbaguanine + guanosine(34) in tRNA = 7-aminomethyl-7-carbaguanosine(34) in tRNA + guanine. Its pathway is tRNA modification; tRNA-queuosine biosynthesis. Functionally, catalyzes the base-exchange of a guanine (G) residue with the queuine precursor 7-aminomethyl-7-deazaguanine (PreQ1) at position 34 (anticodon wobble position) in tRNAs with GU(N) anticodons (tRNA-Asp, -Asn, -His and -Tyr). Catalysis occurs through a double-displacement mechanism. The nucleophile active site attacks the C1' of nucleotide 34 to detach the guanine base from the RNA, forming a covalent enzyme-RNA intermediate. The proton acceptor active site deprotonates the incoming PreQ1, allowing a nucleophilic attack on the C1' of the ribose to form the product. After dissociation, two additional enzymatic reactions on the tRNA convert PreQ1 to queuine (Q), resulting in the hypermodified nucleoside queuosine (7-(((4,5-cis-dihydroxy-2-cyclopenten-1-yl)amino)methyl)-7-deazaguanosine). This chain is Queuine tRNA-ribosyltransferase, found in Buchnera aphidicola subsp. Acyrthosiphon pisum (strain 5A).